We begin with the raw amino-acid sequence, 314 residues long: Homoserine O-succinyltransferase (314 aa).

Cys142 serves as the catalytic Acyl-thioester intermediate. Positions 163 and 192 each coordinate substrate. The active-site Proton acceptor is His235. Glu237 is an active-site residue. A substrate-binding site is contributed by Arg249.

This sequence belongs to the MetA family.

It localises to the cytoplasm. It carries out the reaction L-homoserine + succinyl-CoA = O-succinyl-L-homoserine + CoA. It participates in amino-acid biosynthesis; L-methionine biosynthesis via de novo pathway; O-succinyl-L-homoserine from L-homoserine: step 1/1. Transfers a succinyl group from succinyl-CoA to L-homoserine, forming succinyl-L-homoserine. This is Homoserine O-succinyltransferase from Shewanella frigidimarina (strain NCIMB 400).